The chain runs to 153 residues: Ribonuclease H (153 aa).

Positions 1–142 constitute an RNase H type-1 domain; sequence MRKKIEIFTD…CDELARIAAE (142 aa). Asp10, Glu48, Asp70, and Asp134 together coordinate Mg(2+).

Belongs to the RNase H family. Monomer. Mg(2+) is required as a cofactor.

Its subcellular location is the cytoplasm. The catalysed reaction is Endonucleolytic cleavage to 5'-phosphomonoester.. Its function is as follows. Endonuclease that specifically degrades the RNA of RNA-DNA hybrids. The polypeptide is Ribonuclease H (Baumannia cicadellinicola subsp. Homalodisca coagulata).